Consider the following 91-residue polypeptide: Small ribosomal subunit protein bS16 (91 aa).

Belongs to the bacterial ribosomal protein bS16 family.

The sequence is that of Small ribosomal subunit protein bS16 from Enterococcus faecalis (strain ATCC 700802 / V583).